The following is a 464-amino-acid chain: ATP synthase subunit beta (464 aa).

Residue 153–160 coordinates ATP; the sequence is GGAGVGKT.

This sequence belongs to the ATPase alpha/beta chains family. In terms of assembly, F-type ATPases have 2 components, CF(1) - the catalytic core - and CF(0) - the membrane proton channel. CF(1) has five subunits: alpha(3), beta(3), gamma(1), delta(1), epsilon(1). CF(0) has three main subunits: a(1), b(2) and c(9-12). The alpha and beta chains form an alternating ring which encloses part of the gamma chain. CF(1) is attached to CF(0) by a central stalk formed by the gamma and epsilon chains, while a peripheral stalk is formed by the delta and b chains.

It is found in the cell inner membrane. The enzyme catalyses ATP + H2O + 4 H(+)(in) = ADP + phosphate + 5 H(+)(out). Functionally, produces ATP from ADP in the presence of a proton gradient across the membrane. The catalytic sites are hosted primarily by the beta subunits. This Burkholderia ambifaria (strain ATCC BAA-244 / DSM 16087 / CCUG 44356 / LMG 19182 / AMMD) (Burkholderia cepacia (strain AMMD)) protein is ATP synthase subunit beta.